The chain runs to 239 residues: uncharacterized protein (239 aa).

6 helical membrane passes run 30-50, 76-96, 107-127, 157-177, 188-208, and 214-234; these read VALL…IELI, LYLG…IFII, LIPI…FGYI, FIIL…FQIL, MMLS…AIIT, and LIQL…ILVL.

Belongs to the TatC family.

It localises to the plastid. The protein resides in the chloroplast membrane. This is an uncharacterized protein from Cyanidium caldarium (Red alga).